The primary structure comprises 141 residues: MAKKIQGYIRLQLPAGAANPAPPVGPALGAQGVNIMAFCKDFNARTKDQNGMILPVVITVYTDKSFTFILKSPPASVLLKKAANIATGSGKPNQDRVGKVTKKQCAEIWKLKKADMNAKDEAAGIKTIAGTARQMGIEVVD.

The protein belongs to the universal ribosomal protein uL11 family. As to quaternary structure, part of the ribosomal stalk of the 50S ribosomal subunit. Interacts with L10 and the large rRNA to form the base of the stalk. L10 forms an elongated spine to which L12 dimers bind in a sequential fashion forming a multimeric L10(L12)X complex. Post-translationally, one or more lysine residues are methylated.

Forms part of the ribosomal stalk which helps the ribosome interact with GTP-bound translation factors. The chain is Large ribosomal subunit protein uL11 from Opitutus terrae (strain DSM 11246 / JCM 15787 / PB90-1).